The primary structure comprises 382 residues: Putative 12-oxophytodienoate reductase 3 (382 aa).

Residues Pro37–Thr39, Ala70, and Gln112 each bind FMN. Over residues Ser120–Gln138 the composition is skewed to polar residues. The disordered stretch occupies residues Ser120–Val147. His184–His187 contacts substrate. Residue Tyr189 is the Proton donor of the active site. Arg236 provides a ligand contact to FMN. Arg277 provides a ligand contact to substrate. FMN-binding positions include Gly307 and Gly328–Arg329.

This sequence belongs to the NADH:flavin oxidoreductase/NADH oxidase family. Requires FMN as cofactor.

Putative oxophytodienoate reductase that may be involved in the biosynthesis or metabolism of oxylipin signaling molecules. This is Putative 12-oxophytodienoate reductase 3 (OPR3) from Oryza sativa subsp. japonica (Rice).